A 346-amino-acid chain; its full sequence is Peripherin-2 (346 aa).

Residues 1-24 (MALLKVKFDQKKRVKLAQGLWLMN) lie on the Cytoplasmic side of the membrane. The helical transmembrane segment at 25–43 (WLSVLAGIVLFSLGLFLKI) threads the bilayer. The Lumenal portion of the chain corresponds to 44 to 61 (ELRKRSDVMDNSESHFVP). A helical transmembrane segment spans residues 62-80 (NSLIGVGVLSCVFNSLAGK). Residues 81-99 (ICYDALDPAKYAKWKPWLK) are Cytoplasmic-facing. A helical transmembrane segment spans residues 100–123 (LYLAVCVFFNVILFLVALCCFLLR). Residues 124–264 (GSLESTLAYG…LNYYSSLMNS (141 aa)) are Lumenal-facing. N-linked (GlcNAc...) asparagine glycosylation is present at Asn-229. The helical transmembrane segment at 265 to 290 (MGVVTLLIWLFEVSITAGLRFLHTAL) threads the bilayer. Residues 291 to 346 (ESVSNPEDPECESEGWLLENSVSETWKAFLESFKKLGKSNQVEAEAADAGQAPEAG) lie on the Cytoplasmic side of the membrane. The tract at residues 341 to 346 (QAPEAG) is interaction with MREG.

This sequence belongs to the PRPH2/ROM1 family. Homodimer; disulfide-linked. Forms a homotetramer. Forms a heterotetramer with ROM1. Homotetramer and heterotetramer core complexes go on to form higher order complexes by formation of intermolecular disulfide bonds. Interacts with MREG. Interacts with STX3. Interacts with SNAP25. In terms of tissue distribution, retina (photoreceptor). In rim region of ROS (rod outer segment) disks.

The protein resides in the membrane. Its subcellular location is the cell projection. It localises to the cilium. It is found in the photoreceptor outer segment. The protein localises to the photoreceptor inner segment. Its function is as follows. Essential for retina photoreceptor outer segment disk morphogenesis, may also play a role with ROM1 in the maintenance of outer segment disk structure. Required for the maintenance of retinal outer nuclear layer thickness. Required for the correct development and organization of the photoreceptor inner segment. This chain is Peripherin-2 (Prph2), found in Rattus norvegicus (Rat).